Consider the following 543-residue polypeptide: CTP synthase (543 aa).

An amidoligase domain region spans residues 1–265 (MTRYIFVTGG…DDIVVERFGL (265 aa)). Serine 13 serves as a coordination point for CTP. Serine 13 provides a ligand contact to UTP. Residues 14–19 (SLGKGI) and aspartate 71 each bind ATP. Positions 71 and 139 each coordinate Mg(2+). Residues 146 to 148 (DIE), 186 to 191 (KTKPTQ), and lysine 222 each bind CTP. Residues 186–191 (KTKPTQ) and lysine 222 each bind UTP. The Glutamine amidotransferase type-1 domain maps to 290-541 (TIAMVGKYME…VNAALAQKAR (252 aa)). Residue glycine 351 coordinates L-glutamine. The Nucleophile; for glutamine hydrolysis role is filled by cysteine 378. L-glutamine-binding positions include 379–382 (LGMQ), glutamate 402, and arginine 469. Active-site residues include histidine 514 and glutamate 516.

Belongs to the CTP synthase family. In terms of assembly, homotetramer.

It carries out the reaction UTP + L-glutamine + ATP + H2O = CTP + L-glutamate + ADP + phosphate + 2 H(+). The enzyme catalyses L-glutamine + H2O = L-glutamate + NH4(+). It catalyses the reaction UTP + NH4(+) + ATP = CTP + ADP + phosphate + 2 H(+). It functions in the pathway pyrimidine metabolism; CTP biosynthesis via de novo pathway; CTP from UDP: step 2/2. Allosterically activated by GTP, when glutamine is the substrate; GTP has no effect on the reaction when ammonia is the substrate. The allosteric effector GTP functions by stabilizing the protein conformation that binds the tetrahedral intermediate(s) formed during glutamine hydrolysis. Inhibited by the product CTP, via allosteric rather than competitive inhibition. Its function is as follows. Catalyzes the ATP-dependent amination of UTP to CTP with either L-glutamine or ammonia as the source of nitrogen. Regulates intracellular CTP levels through interactions with the four ribonucleotide triphosphates. The protein is CTP synthase of Azotobacter vinelandii (strain DJ / ATCC BAA-1303).